The following is a 94-amino-acid chain: Protein SpdA (94 aa).

Residues 41-68 (GPILLALVAAGGSVGVVMTLCLLLQTAA) traverse the membrane as a helical segment.

It localises to the cell membrane. Involved in plasmid transfer. In Streptomyces lividans, this protein is Protein SpdA (spdA).